Reading from the N-terminus, the 624-residue chain is MTQAEKGDTENGKEKGGEKEKEQRGVKRPIVPALVPESLQEQIQSNFIIVIHPGSTTLRIGRATDTLPASIPHVIARRHKQQGQPLYKDSWLLREGLNKPESNEQRQNGLKMVDQAIWSKKMSNGTRRIPVSPEQARSYNKQMRPAILDHCSGNKWTNTSHHPECLVGEEALYVNPLDCYNIHWPIRRGQLNIHPGPGGSLTAVLADIEVIWSHAIQKYLEIPLKDLKYYRCILLIPDIYNKQHVKELVNMILMKMGFSGIVVHQESVCATYGSGLSSTCIVDVGDQKTSVCCVEDGVSHRNTRLCLAYGGSDVSRCFYWLMQRAGFPYRECQLTNKMDCLLLQHLKETFCHLDQDISGLQDHEFQIRHPDSPALLYQFRLGDEKLQAPMALFYPATFGIVGQKMTTLQHRSQGDPEDPHDEHYLLATQSKQEQSAKATADRKSASKPIGFEGDLRGQSSDLPERLHSQEVDLGSAQGDGLMAGNDSEEALTALMSRKTAISLFEGKALGPDKAILHSIDCCSSDDTKKKMYSSILVVGGGLMFHKAQEFLQHRILNKMPPSFRRIIENVDVITRPKDMDPRLIAWKGGAVLACLDTTQELWIYQREWQRFGVRMLRERAAFVW.

An N-acetylmethionine modification is found at Met-1. Over residues 1-25 (MTQAEKGDTENGKEKGGEKEKEQRG) the composition is skewed to basic and acidic residues. Positions 1 to 29 (MTQAEKGDTENGKEKGGEKEKEQRGVKRP) are disordered. 2 residues coordinate ATP: Ser-55 and Thr-56. Position 132 is a phosphoserine (Ser-132). Residue 283–286 (DVGD) coordinates ATP. Position 412 is a phosphoserine (Ser-412). The disordered stretch occupies residues 430 to 462 (SKQEQSAKATADRKSASKPIGFEGDLRGQSSDL).

Belongs to the actin family. ARP8 subfamily. Component of the chromatin remodeling INO80 complex; specifically part of a complex module associated with the DBINO domain of INO80. Exists as monomers and dimers, but the dimer is most probably the biologically relevant form required for stable interactions with histones that exploits the twofold symmetry of the nucleosome core.

The protein resides in the nucleus. It is found in the chromosome. Its function is as follows. Plays an important role in the functional organization of mitotic chromosomes. Exhibits low basal ATPase activity, and unable to polymerize. In terms of biological role, proposed core component of the chromatin remodeling INO80 complex which is involved in transcriptional regulation, DNA replication and probably DNA repair. Required for the recruitment of INO80 (and probably the INO80 complex) to sites of DNA damage Strongly prefer nucleosomes and H3-H4 tetramers over H2A-H2B dimers, suggesting it may act as a nucleosome recognition module within the complex. The sequence is that of Actin-related protein 8 (ACTR8) from Pongo abelii (Sumatran orangutan).